The primary structure comprises 122 residues: Large ribosomal subunit protein uL14c (122 aa).

The protein belongs to the universal ribosomal protein uL14 family. As to quaternary structure, part of the 50S ribosomal subunit.

Its subcellular location is the plastid. The protein localises to the chloroplast. Binds to 23S rRNA. This Coffea arabica (Arabian coffee) protein is Large ribosomal subunit protein uL14c.